A 410-amino-acid polypeptide reads, in one-letter code: Lissencephaly-1 homolog (410 aa).

The LisH domain occupies 7–39; it reads QQEELQLAVHAYLVEAGHAEAAAAMAKSANLGD. Positions 55–80 form a coiled coil; the sequence is TTITRLQKRNMELQAEVEELRSSARA. 7 WD repeats span residues 104 to 143, 146 to 185, 188 to 227, 230 to 269, 294 to 333, 336 to 375, and 378 to 410; these read GHRLPITAVAIHPSFAVMASASEDASIKLWDMESGNFERS, GHTNAVNDIAYDREGNRLVSCSTDMTIKVWNMDNFTCTKT, GHDHTVSSVRFDHTGDRVFSASRDKTIKIWELATGYCLQT, GHSDWVRSIDVSADGAWICSASSDHTVRVWSVASGECKHV, MIFGSKPSAEAASKGPFVASASRDKSICLFDVSTGQHLAR, GHDNWVRATAWSRGGRYLFSVADDKTMRVWDIATKRVSKT, and AHNHFVSCIAVHAKNTHVVTGSVDLKVKVWECN.

Belongs to the WD repeat LIS1/nudF family.

The protein resides in the cytoplasm. The protein localises to the cytoskeleton. It localises to the microtubule organizing center. Its subcellular location is the centrosome. Functionally, positively regulates the activity of the minus-end directed microtubule motor protein dynein. May enhance dynein-mediated microtubule sliding by targeting dynein to the microtubule plus end. Required for several dynein- and microtubule-dependent processes. In Monosiga brevicollis (Choanoflagellate), this protein is Lissencephaly-1 homolog.